The sequence spans 439 residues: tRNA modification GTPase MnmE (439 aa).

(6S)-5-formyl-5,6,7,8-tetrahydrofolate is bound by residues Arg-24, Glu-81, and Lys-121. In terms of domain architecture, TrmE-type G spans 218 to 363 (GFKVVIAGAP…LRDLIGRVVK (146 aa)). A K(+)-binding site is contributed by Asn-228. GTP contacts are provided by residues 228–233 (NAGKSS), 247–253 (TDIAGTT), and 272–275 (DTAG). Ser-232 serves as a coordination point for Mg(2+). Residues Thr-247, Ile-249, and Thr-252 each coordinate K(+). Thr-253 is a binding site for Mg(2+). Lys-439 contacts (6S)-5-formyl-5,6,7,8-tetrahydrofolate.

This sequence belongs to the TRAFAC class TrmE-Era-EngA-EngB-Septin-like GTPase superfamily. TrmE GTPase family. Homodimer. Heterotetramer of two MnmE and two MnmG subunits. The cofactor is K(+).

The protein resides in the cytoplasm. Functionally, exhibits a very high intrinsic GTPase hydrolysis rate. Involved in the addition of a carboxymethylaminomethyl (cmnm) group at the wobble position (U34) of certain tRNAs, forming tRNA-cmnm(5)s(2)U34. This is tRNA modification GTPase MnmE from Rhizobium etli (strain CIAT 652).